The primary structure comprises 804 residues: Probable replication endonuclease from prophage-like region (804 aa).

Active-site O-(5'-phospho-DNA)-tyrosine intermediate residues include Y498 and Y502.

The protein belongs to the phage GPA family.

Its function is as follows. Possible endonuclease which induces a single-strand cut and initiates DNA replication. This is Probable replication endonuclease from prophage-like region from Escherichia coli O6:H1 (strain CFT073 / ATCC 700928 / UPEC).